Consider the following 421-residue polypeptide: UDP-N-acetylglucosamine 1-carboxyvinyltransferase (421 aa).

22–23 (KN) serves as a coordination point for phosphoenolpyruvate. R91 contributes to the UDP-N-acetyl-alpha-D-glucosamine binding site. Catalysis depends on C115, which acts as the Proton donor. The residue at position 115 (C115) is a 2-(S-cysteinyl)pyruvic acid O-phosphothioketal. Residues 120–124 (RPIDL), D306, and I328 contribute to the UDP-N-acetyl-alpha-D-glucosamine site.

Belongs to the EPSP synthase family. MurA subfamily.

It localises to the cytoplasm. The catalysed reaction is phosphoenolpyruvate + UDP-N-acetyl-alpha-D-glucosamine = UDP-N-acetyl-3-O-(1-carboxyvinyl)-alpha-D-glucosamine + phosphate. It participates in cell wall biogenesis; peptidoglycan biosynthesis. In terms of biological role, cell wall formation. Adds enolpyruvyl to UDP-N-acetylglucosamine. The polypeptide is UDP-N-acetylglucosamine 1-carboxyvinyltransferase (Methylacidiphilum infernorum (isolate V4) (Methylokorus infernorum (strain V4))).